Reading from the N-terminus, the 72-residue chain is Small ribosomal subunit protein bS18 (72 aa).

The protein belongs to the bacterial ribosomal protein bS18 family. As to quaternary structure, part of the 30S ribosomal subunit. Forms a tight heterodimer with protein bS6.

Its function is as follows. Binds as a heterodimer with protein bS6 to the central domain of the 16S rRNA, where it helps stabilize the platform of the 30S subunit. This Fusobacterium nucleatum subsp. nucleatum (strain ATCC 25586 / DSM 15643 / BCRC 10681 / CIP 101130 / JCM 8532 / KCTC 2640 / LMG 13131 / VPI 4355) protein is Small ribosomal subunit protein bS18.